The primary structure comprises 395 residues: Nucleoside diphosphate kinase homolog 7 (395 aa).

In terms of domain architecture, DM10 spans 22–110 (QSERFAFIAE…YTARQLGSRK (89 aa)).

This sequence belongs to the NDK family. In terms of assembly, component of sperm flagellar doublet microtubules. Component of the gamma-tubulin ring complex. In terms of tissue distribution, widely expressed. Expressed in the flagellum of epididymal sperm but not in testicular sperm (at protein level).

The protein resides in the cytoplasm. The protein localises to the cytoskeleton. It is found in the microtubule organizing center. Its subcellular location is the centrosome. It localises to the nucleus. The protein resides in the spindle. The protein localises to the cilium axoneme. It is found in the flagellum axoneme. Its subcellular location is the cell projection. It localises to the cilium. Functionally, possesses an intrinsic kinase activity. Displays 3'-5' exonuclease activity with a preference for single-stranded DNA. Does not seem to have nucleoside diphosphate kinase activity. Functional component of the gamma-tubulin ring complex, implicated in the regulation of the microtubule-nucleating activity of the gamma-tubulin ring complex in centrosomes, in a kinase activity-dependent manner. Part of the dynein-decorated doublet microtubules (DMTs) in cilia axoneme, which is required for motile cilia beating. The polypeptide is Nucleoside diphosphate kinase homolog 7 (Nme7) (Rattus norvegicus (Rat)).